The following is a 1092-amino-acid chain: Probable cellulose synthase A catalytic subunit 6 [UDP-forming] (1092 aa).

Residues 1–280 are Cytoplasmic-facing; the sequence is MEASAGLVAG…SSSRINPYRM (280 aa). Zn(2+) contacts are provided by Cys42, Cys45, Cys61, Cys64, Cys69, Cys72, Cys84, and Cys87. The RING-type; degenerate zinc finger occupies 42–88; it reads CQICGDDVGEGPDGEPFVACNECAFPVCRNCYDYERREGSQACPQCK. Positions 100-123 are disordered; sequence VAGDEEEDGVDDLEGEFGLDGRED. Positions 103-116 are enriched in acidic residues; sequence DEEEDGVDDLEGEF. The helical transmembrane segment at 281–301 threads the bilayer; the sequence is IIIIRLVVLGFFFHYRVMHPV. The Extracellular segment spans residues 302 to 303; that stretch reads ND. Residues 304-324 traverse the membrane as a helical segment; the sequence is AFALWLISVICEIWFAMSWIL. Over 325–868 the chain is Cytoplasmic; that stretch reads DQFPKWLPIE…FLERFSYINS (544 aa). The UDP-alpha-D-glucose site is built by Ser363, Lys369, Glu370, and Asp399. Asp399 is a catalytic residue. A coiled-coil region spans residues 453 to 480; the sequence is VRERRAMKRDYEEFKVRINALVAKAQKV. Position 540 (Lys540) interacts with UDP-alpha-D-glucose. Mn(2+) contacts are provided by Lys541 and Asp565. The active site involves Asp792. The chain crosses the membrane as a helical span at residues 869-889; sequence IVYPWTSIPLLAYCTLPAICL. The Extracellular segment spans residues 890 to 901; it reads LTGKFITPELTN. The helical transmembrane segment at 902 to 922 threads the bilayer; the sequence is VASLWFMSLFICIFVTGILEM. At 923–937 the chain is on the cytoplasmic side; that stretch reads RWSGVAIDDWWRNEQ. Residues 938-958 form a helical membrane-spanning segment; sequence FWVIGGVSSHLFAVFQGLLKV. The Extracellular portion of the chain corresponds to 959–987; sequence LAGVDTSFTVTSKAGDDEEFSELYTFKWT. A helical transmembrane segment spans residues 988–1008; it reads TLLIPPTTLLLLNFIGVVAGV. At 1009-1019 the chain is on the cytoplasmic side; the sequence is SNAINNGYESW. A helical transmembrane segment spans residues 1020–1040; it reads GPLFGKLFFAFWVIVHLYPFL. At 1041–1049 the chain is on the extracellular side; it reads KGLVGRQNR. Residues 1050–1070 form a helical membrane-spanning segment; that stretch reads TPTIVIVWSILLASIFSLLWV. Over 1071–1092 the chain is Cytoplasmic; it reads RIDPFLAKNNGPLLEECGLDCN.

The protein belongs to the glycosyltransferase 2 family. Plant cellulose synthase subfamily. Requires Mn(2+) as cofactor. The cofactor is Zn(2+).

It is found in the cell membrane. It catalyses the reaction [(1-&gt;4)-beta-D-glucosyl](n) + UDP-alpha-D-glucose = [(1-&gt;4)-beta-D-glucosyl](n+1) + UDP + H(+). Its pathway is glycan metabolism; plant cellulose biosynthesis. In terms of biological role, probable catalytic subunit of cellulose synthase terminal complexes ('rosettes'), required for beta-1,4-glucan microfibril crystallization, a major mechanism of the cell wall formation. This Oryza sativa subsp. japonica (Rice) protein is Probable cellulose synthase A catalytic subunit 6 [UDP-forming] (CESA6).